A 103-amino-acid polypeptide reads, in one-letter code: Large ribosomal subunit protein uL24 (103 aa).

The protein belongs to the universal ribosomal protein uL24 family. Part of the 50S ribosomal subunit.

In terms of biological role, one of two assembly initiator proteins, it binds directly to the 5'-end of the 23S rRNA, where it nucleates assembly of the 50S subunit. One of the proteins that surrounds the polypeptide exit tunnel on the outside of the subunit. The protein is Large ribosomal subunit protein uL24 of Haemophilus ducreyi (strain 35000HP / ATCC 700724).